We begin with the raw amino-acid sequence, 179 residues long: Large ribosomal subunit protein uL5 (179 aa).

This sequence belongs to the universal ribosomal protein uL5 family. As to quaternary structure, part of the 50S ribosomal subunit; part of the 5S rRNA/L5/L18/L25 subcomplex. Contacts the 5S rRNA and the P site tRNA. Forms a bridge to the 30S subunit in the 70S ribosome.

Functionally, this is one of the proteins that bind and probably mediate the attachment of the 5S RNA into the large ribosomal subunit, where it forms part of the central protuberance. In the 70S ribosome it contacts protein S13 of the 30S subunit (bridge B1b), connecting the 2 subunits; this bridge is implicated in subunit movement. Contacts the P site tRNA; the 5S rRNA and some of its associated proteins might help stabilize positioning of ribosome-bound tRNAs. This is Large ribosomal subunit protein uL5 from Francisella philomiragia subsp. philomiragia (strain ATCC 25017 / CCUG 19701 / FSC 153 / O#319-036).